The following is a 563-amino-acid chain: Merozoite receptor PK66 (563 aa).

Positions 1–13 are cleaved as a signal peptide; sequence MNKIYYILFLSAQ. The Extracellular portion of the chain corresponds to 14–487; it reads CLVHMGKCER…DGKHKKKMLL (474 aa). N-linked (GlcNAc...) asparagine glycosylation is found at Asn36, Asn107, Asn176, Asn189, Asn238, and Asn441. The helical transmembrane segment at 488–508 threads the bilayer; the sequence is IIIGVTGAVCVVAVASLFYFR. Topologically, residues 509-563 are cytoplasmic; it reads KKAQDDKYDKMDQAEAYGKTANTRKDEMLDPEASFWGEDKRASHTTPVLMEKPYY.

The protein belongs to the apicomplexan parasites AMA1 family.

Its subcellular location is the membrane. Its function is as follows. Merozoite receptor PK66 is a surface antigen involved in parasite invasion of erythrocytes. In Plasmodium knowlesi (strain nuri), this protein is Merozoite receptor PK66 (PK66).